The sequence spans 646 residues: Calcium-dependent protein kinase 2 (646 aa).

A lipid anchor (N-myristoyl glycine) is attached at G2. C5 carries S-palmitoyl cysteine lipidation. The segment at 27–169 (RIGAEQASSS…HMRRVSSAGL (143 aa)) is disordered. Over residues 32 to 43 (QASSSSHGNGQV) the composition is skewed to polar residues. Basic and acidic residues-rich tracts occupy residues 73–119 (PETK…KREV) and 126–157 (AKPETKSESKPETTKPETTSETKPETKAEPQK). In terms of domain architecture, Protein kinase spans 186 to 444 (YSLGRKLGQG…AHQVLCHPWV (259 aa)). Residues 192-200 (LGQGQFGTT) and K215 contribute to the ATP site. The active-site Proton acceptor is D310. Phosphoserine is present on S350. An autoinhibitory domain region spans residues 450–480 (APDKPLDSAVLSRMKQFSAMNKFKKMALRVI). EF-hand domains lie at 487 to 522 (EEIAGLKQMFKMIDADNSGQITFEELKAGLKRVGAN), 523 to 558 (LKESEILDLMQAADVDNSGTIDYKEFIAATLHLNKI), 559 to 592 (EREDHLFAAFSYFDKDESGFITPDELQQACEEFG), and 593 to 628 (VEDARIEEMMRDVDQDKDGRIDYNEFVAMMQKGSIM). Ca(2+) is bound by residues D500, D502, S504, Q506, E511, D536, D538, S540, T542, E547, D572, D574, S576, E583, D606, D608, D610, R612, and E617.

It belongs to the protein kinase superfamily. Ser/Thr protein kinase family. CDPK subfamily. Interacts with 14-3-3 proteins.

It localises to the endoplasmic reticulum membrane. The catalysed reaction is L-seryl-[protein] + ATP = O-phospho-L-seryl-[protein] + ADP + H(+). The enzyme catalyses L-threonyl-[protein] + ATP = O-phospho-L-threonyl-[protein] + ADP + H(+). Its activity is regulated as follows. Activated by calcium. Autophosphorylation may play an important role in the regulation of the kinase activity. Functionally, may play a role in signal transduction pathways that involve calcium as a second messenger. The protein is Calcium-dependent protein kinase 2 (CPK2) of Arabidopsis thaliana (Mouse-ear cress).